The sequence spans 286 residues: L-cysteine S-thiosulfotransferase subunit SoxA (286 aa).

The first 28 residues, 1-28 (MKKTIQRGLFTGALVLLTAMTSKPAHAA), serve as a signal peptide directing secretion. Residues Cys-106 and Cys-137 are joined by a disulfide bond. The Cytochrome c domain occupies 180-286 (DAYMKGKEMF…LKFNGPASRK (107 aa)). 2 residues coordinate heme: Cys-200 and His-204. Arg-243 serves as a coordination point for substrate. Heme is bound at residue Cys-247. The Cysteine persulfide intermediate role is filled by Cys-247.

It belongs to the SoxA family. As to quaternary structure, heterodimer of SoxA and SoxX. The SoxAX complex interacts with CT1020, SoxAX-binding protein SaxB (SoxK); this interaction stimulates catalytic activity of the complex. Heme serves as cofactor. Cysteine persulfide at Cys-247.

The protein resides in the periplasm. It catalyses the reaction L-cysteinyl-[SoxY protein] + thiosulfate + 2 Fe(III)-[cytochrome c] = S-sulfosulfanyl-L-cysteinyl-[SoxY protein] + 2 Fe(II)-[cytochrome c] + 2 H(+). The catalysed reaction is S-sulfanyl-L-cysteinyl-[SoxY protein] + thiosulfate + 2 Fe(III)-[cytochrome c] = S-(2-sulfodisulfanyl)-L-cysteinyl-[SoxY protein] + 2 Fe(II)-[cytochrome c] + 2 H(+). In terms of biological role, C-type monoheme cytochrome, which is part of the SoxAX cytochrome complex involved in sulfur oxidation. The SoxAX complex catalyzes the formation of a heterodisulfide bond between the conserved cysteine residue on a sulfur carrier SoxYZ complex subunit SoxY and thiosulfate or other inorganic sulfur substrates. This leads to the liberation of two electrons, which may be transferred from the SoxAX complex to another cytochrome c and which then may be used for reductive CO(2) fixation. This Chlorobaculum thiosulfatiphilum (Chlorobium limicola f.sp. thiosulfatophilum) protein is L-cysteine S-thiosulfotransferase subunit SoxA.